The sequence spans 165 residues: Large ribosomal subunit protein uL10 (165 aa).

The protein belongs to the universal ribosomal protein uL10 family. As to quaternary structure, part of the ribosomal stalk of the 50S ribosomal subunit. The N-terminus interacts with L11 and the large rRNA to form the base of the stalk. The C-terminus forms an elongated spine to which L12 dimers bind in a sequential fashion forming a multimeric L10(L12)X complex.

Forms part of the ribosomal stalk, playing a central role in the interaction of the ribosome with GTP-bound translation factors. The sequence is that of Large ribosomal subunit protein uL10 from Deinococcus deserti (strain DSM 17065 / CIP 109153 / LMG 22923 / VCD115).